The following is a 452-amino-acid chain: Probable ECA polymerase (452 aa).

The next 11 membrane-spanning stretches (helical) occupy residues 6–26, 37–57, 63–83, 118–138, 155–175, 181–201, 207–227, 228–248, 341–361, 378–398, and 410–430; these read FSGL…LTWF, VFFS…TSVL, VGVA…CFYG, VILM…NGFL, GVAL…VYFL, AWLF…MIVG, IIIA…ISLW, MLAA…LKRY, LVVM…GLII, YKAA…IVLA, and VFFL…FWLF.

Belongs to the WzyE family. Probably part of a complex composed of WzxE, WzyE and WzzE.

The protein localises to the cell inner membrane. It functions in the pathway bacterial outer membrane biogenesis; enterobacterial common antigen biosynthesis. Functionally, probably involved in the polymerization of enterobacterial common antigen (ECA) trisaccharide repeat units. In Salmonella arizonae (strain ATCC BAA-731 / CDC346-86 / RSK2980), this protein is Probable ECA polymerase.